A 1054-amino-acid chain; its full sequence is Disks large-associated protein 2 (1054 aa).

Disordered stretches follow at residues 32–87 (EPEE…SGSR) and 242–301 (SHSL…SDDN). The span at 242–255 (SHSLEGSSKSNANG) shows a compositional bias: polar residues. Positions 267–281 (HAHHAKHSKRSKSKE) are enriched in basic residues. The span at 289–299 (RPGMSSWWSSD) shows a compositional bias: low complexity. Residues Ser298, Ser304, Ser386, and Ser452 each carry the phosphoserine modification. Disordered stretches follow at residues 442–464 (GDEE…ILPE) and 609–666 (YKKT…TDSL). The segment covering 628 to 641 (VTAQSSTESTQDAY) has biased composition (polar residues). A phosphoserine mark is found at Ser662, Ser665, Ser668, and Ser715. The tract at residues 719–746 (QDSEFPEHQPYPRSDVETATDSDTESRG) is disordered. Residue Thr738 is modified to Phosphothreonine. A phosphoserine mark is found at Ser740, Ser771, Ser806, Ser978, and Ser1007. Composition is skewed to basic and acidic residues over residues 977–987 (ESPERKEERKV) and 1002–1020 (ITRE…EARR). A disordered region spans residues 977-1021 (ESPERKEERKVPPPIPKKPPKGKFPITREKSLDLPDRQRQEARRR).

Belongs to the SAPAP family. In terms of assembly, interacts with DLG1 and DLG4/PSD-95. In terms of tissue distribution, expressed in brain and kidney.

Its subcellular location is the cell membrane. It is found in the postsynaptic density. The protein resides in the synapse. May play a role in the molecular organization of synapses and neuronal cell signaling. Could be an adapter protein linking ion channel to the subsynaptic cytoskeleton. May induce enrichment of PSD-95/SAP90 at the plasma membrane. The polypeptide is Disks large-associated protein 2 (Homo sapiens (Human)).